A 301-amino-acid polypeptide reads, in one-letter code: Prestalk A differentiation protein A (301 aa).

This sequence belongs to the NmrA-type oxidoreductase family.

Involved in development and cell differentiation. This is Prestalk A differentiation protein A (padA) from Dictyostelium discoideum (Social amoeba).